We begin with the raw amino-acid sequence, 545 residues long: Carboxypeptidase Y homolog A (545 aa).

The N-terminal stretch at 1-17 (MKSLALALLVGGAIAAG) is a signal peptide. The propeptide occupies 18–123 (PQQQVLQAPV…KLEAYDLRVK (106 aa)). 5 disulfide bridges follow: Cys-177–Cys-416, Cys-311–Cys-325, Cys-335–Cys-358, Cys-342–Cys-351, and Cys-380–Cys-386. An N-linked (GlcNAc...) asparagine glycan is attached at Asn-208. Ser-264 is a catalytic residue. The active site involves Asp-455. Residues Asn-485, Asn-491, and Asn-506 are each glycosylated (N-linked (GlcNAc...) asparagine). His-517 is a catalytic residue.

This sequence belongs to the peptidase S10 family.

The protein resides in the vacuole. The catalysed reaction is Release of a C-terminal amino acid with broad specificity.. Vacuolar carboxypeptidase involved in degradation of small peptides. Digests preferentially peptides containing an aliphatic or hydrophobic residue in P1' position, as well as methionine, leucine or phenylalanine in P1 position of ester substrate. The protein is Carboxypeptidase Y homolog A (CPYA) of Blastomyces gilchristii (strain SLH14081) (Blastomyces dermatitidis).